The primary structure comprises 76 residues: MAKRDDRSNNPERIENIIGNTLQNMDEARDYAKAHSEELSEEEKQEIEQKNERREQSIDGLREELKDEVNDQKNNS.

Composition is skewed to basic and acidic residues over residues 1 to 15 (MAKR…ERIE), 26 to 38 (DEAR…HSEE), and 46 to 76 (EIEQ…KNNS). A disordered region spans residues 1 to 76 (MAKRDDRSNN…DEVNDQKNNS (76 aa)).

This sequence belongs to the Tlp family.

Its subcellular location is the spore core. The chain is Small, acid-soluble spore protein Tlp from Shouchella clausii (strain KSM-K16) (Alkalihalobacillus clausii).